Consider the following 212-residue polypeptide: MSIGGVYELAFCRSSLKSKKYFIILLALAAIAGLGTHAAWSSNGLPRIDNKTLARLAQQHPVVVLFRHAERCDRSTNQCLSDKTGITVKGTQDARELGNAFSADIPDFDLYSSNTVRTIQSATWFSAGKKLTVDKRLLQCGNEIYSAIKDLQSKAPDKNIVIFTHNHCLTYIAKNKRDATFKPDYLDGLVMHVEKGKVYLDGEFGNAANLLI.

Positions 1-32 (MSIGGVYELAFCRSSLKSKKYFIILLALAAIA) are cleaved as a signal peptide.

It belongs to the phosphoglycerate mutase family. Ais subfamily.

The protein localises to the periplasm. It functions in the pathway bacterial outer membrane biogenesis; lipopolysaccharide metabolism. In terms of biological role, catalyzes the dephosphorylation of heptose(II) of the outer membrane lipopolysaccharide core. The chain is Lipopolysaccharide core heptose(II)-phosphate phosphatase from Shigella boydii serotype 4 (strain Sb227).